Reading from the N-terminus, the 3953-residue chain is Zinc finger protein 469 (3953 aa).

Disordered regions lie at residues 1–274, 313–465, 512–672, 763–784, 869–1383, 1400–1461, 1575–1610, 1703–1864, 1884–1947, 1991–2030, 2070–2700, 2716–2915, 3001–3036, and 3072–3110; these read MPGE…VSFQ, WPEE…MFFN, EWQG…FPFP, GHQR…RVPA, ADEE…HSEL, PKPS…DLPV, LQRS…SQRR, SKTG…GASS, VSNT…TVEG, KTQG…TGPT, LTAA…TLGP, AGET…LSDS, EMPA…PGNT, and GPSF…PAKG. The segment covering 187–198 has biased composition (polar residues); that stretch reads PPSSFTSTNYTS. 2 stretches are compositionally biased toward pro residues: residues 202 to 211 and 324 to 335; these read TPRPPAPGPP and YPLPTQPAPSPL. Residues 603–623 are compositionally biased toward low complexity; that stretch reads STCSSLSPMSSSPANPSSEES. 2 stretches are compositionally biased toward pro residues: residues 768–780 and 896–911; these read PGPP…PAAP and KAPP…PQTP. The span at 944-953 shows a compositional bias: basic residues; it reads QQRRGKQLKL. The span at 963-975 shows a compositional bias: gly residues; it reads AAEGSGSGGGGRA. The segment covering 981–991 has biased composition (basic and acidic residues); it reads RRNDGLGERPP. The span at 1005–1017 shows a compositional bias: low complexity; sequence RADPAPRVPRAAA. Basic residues-rich tracts occupy residues 1025–1042 and 1058–1070; these read SRRR…RKAR and KNRR…RRAG. A compositionally biased stretch (basic and acidic residues) spans 1082–1093; the sequence is PGAEDRRLREYD. Residues 1094–1103 are compositionally biased toward acidic residues; it reads FASESEEDEQ. Basic and acidic residues predominate over residues 1120–1137; it reads KRKEVELTQGPREDEPQK. Positions 1158-1177 are enriched in low complexity; sequence PGGSRPGPGRSPQARGPSRS. Basic and acidic residues predominate over residues 1213 to 1229; it reads EETRPSLDFPQEAKEPE. Composition is skewed to polar residues over residues 1278–1290 and 1333–1350; these read PKPS…TAPH and NPSS…SKIS. The segment covering 1577–1595 has biased composition (basic and acidic residues); that stretch reads RSKDTRGAPRELAEAESVG. Composition is skewed to polar residues over residues 1991-2005 and 2014-2024; these read KTQG…QPEN and NHASVNASPKT. Basic and acidic residues predominate over residues 2243–2262; sequence DTPKDSTLRIPEDSRKEKLW. Polar residues predominate over residues 2409–2435; it reads TAPSSTASDFQSDSPQSHRNASHQTPQ. The segment at 2472–2498 adopts a C2H2-type 1 zinc-finger fold; sequence VTCEVCAASFRSGPGLSRHKARKHRPH. Residues 2488–2498 show a composition bias toward basic residues; it reads SRHKARKHRPH. The span at 2506-2521 shows a compositional bias: low complexity; sequence SPAALPAQQPLEPLAQ. Residues 2534–2546 are compositionally biased toward basic and acidic residues; sequence SGKERPNHSRGDP. Positions 2565–2574 are enriched in low complexity; the sequence is PGSPHSQQLH. The span at 2592-2631 shows a compositional bias: basic and acidic residues; sequence PRPDQAREDELHPKQAEKREGRRWRREPTVDSPSHSEGKS. The span at 2632–2642 shows a compositional bias: basic residues; it reads NKKRGKLRGRR. The segment covering 2664–2676 has biased composition (low complexity); the sequence is PSPAMASYAASPS. Residues 2777 to 2787 show a composition bias toward basic and acidic residues; that stretch reads DSSRAHSRSEE. The span at 2805–2816 shows a compositional bias: low complexity; it reads TSSSPADSTTSS. Over residues 2869–2879 the composition is skewed to basic residues; it reads LTRKRNPHVYG. Low complexity predominate over residues 3095–3105; sequence AAGAGRAQGRG. A C2H2-type 2 zinc finger spans residues 3115–3137; that stretch reads YKCKVCFQRFRSLGELDLHKLAH. The interval 3232-3322 is disordered; sequence TEPAPKHHRG…PDPWAGGEPL (91 aa). Positions 3260–3272 are enriched in basic and acidic residues; the sequence is GEAKKDSPGERAK. The segment covering 3302–3314 has biased composition (pro residues); that stretch reads PGPPRTTPSPSPD. 2 consecutive C2H2-type zinc fingers follow at residues 3337-3359 and 3365-3388; these read RDCH…LAVH and YLCP…GGAH. The C2H2-type 5; degenerate zinc finger occupies 3418–3442; the sequence is FACSSCNYTFAKKEQFDRHMNKHLR. 3 disordered regions span residues 3448 to 3501, 3518 to 3559, and 3576 to 3925; these read FAFR…PILS, STTK…SPFP, and ERPE…HRTA. The span at 3584-3602 shows a compositional bias: low complexity; the sequence is PGSPGPLLQQALPLGASLP. The segment covering 3633-3651 has biased composition (basic and acidic residues); it reads CAPDHFQEDHLLQKEKEVS. Composition is skewed to low complexity over residues 3728–3741 and 3749–3759; these read PGPS…PRPG and QPQPASGQLQS. 2 stretches are compositionally biased toward basic and acidic residues: residues 3876-3892 and 3915-3925; these read EQRK…DRLG and EPAEPHTHRTA.

This sequence belongs to the krueppel C2H2-type zinc-finger protein family. As to expression, detected in cornea, sclera, skin fibroblasts and striated muscle.

The protein localises to the nucleus. In terms of biological role, may be involved in transcriptional regulation. This chain is Zinc finger protein 469 (ZNF469), found in Homo sapiens (Human).